Here is a 278-residue protein sequence, read N- to C-terminus: Maltodextrin transport system permease protein MdxG (278 aa).

6 helical membrane-spanning segments follow: residues 12–32, 74–94, 108–128, 131–151, 183–203, and 242–262; these read ICTY…LLIT, TLVI…LAGY, LIFF…AFYV, MLIG…GGGI, IFAS…ALWA, and VALF…LFFF. Positions 71–263 constitute an ABC transmembrane type-1 domain; that stretch reads YSNTLVIALS…LPICVLFFFL (193 aa).

This sequence belongs to the binding-protein-dependent transport system permease family. MalFG subfamily. The complex is composed of two ATP-binding proteins (MsmX), two transmembrane proteins (MdxF and MdxG) and a solute-binding protein (MdxE).

The protein localises to the cell membrane. Functionally, part of the ABC transporter complex involved in maltodextrin import. Probably responsible for the translocation of the substrate across the membrane. This Bacillus subtilis (strain 168) protein is Maltodextrin transport system permease protein MdxG (mdxG).